Reading from the N-terminus, the 45-residue chain is Metallothionein-like protein 1C (45 aa).

It belongs to the metallothionein superfamily. Type 15 family. As to expression, widely expressed at low levels.

Its function is as follows. Metallothioneins have a high content of cysteine residues that bind various heavy metals. Confers tolerance to cadmium (Cd) and plays a role in Cd and zinc (Zn) homeostasis. In Arabidopsis thaliana (Mouse-ear cress), this protein is Metallothionein-like protein 1C (MT1C).